Here is a 344-residue protein sequence, read N- to C-terminus: N-acetyl-gamma-glutamyl-phosphate reductase (344 aa).

C150 is a catalytic residue.

The protein belongs to the NAGSA dehydrogenase family. Type 1 subfamily.

The protein resides in the cytoplasm. The enzyme catalyses N-acetyl-L-glutamate 5-semialdehyde + phosphate + NADP(+) = N-acetyl-L-glutamyl 5-phosphate + NADPH + H(+). It participates in amino-acid biosynthesis; L-arginine biosynthesis; N(2)-acetyl-L-ornithine from L-glutamate: step 3/4. In terms of biological role, catalyzes the NADPH-dependent reduction of N-acetyl-5-glutamyl phosphate to yield N-acetyl-L-glutamate 5-semialdehyde. This Pseudomonas entomophila (strain L48) protein is N-acetyl-gamma-glutamyl-phosphate reductase.